A 123-amino-acid chain; its full sequence is Ribonuclease P protein component (123 aa).

This sequence belongs to the RnpA family. In terms of assembly, consists of a catalytic RNA component (M1 or rnpB) and a protein subunit.

It carries out the reaction Endonucleolytic cleavage of RNA, removing 5'-extranucleotides from tRNA precursor.. RNaseP catalyzes the removal of the 5'-leader sequence from pre-tRNA to produce the mature 5'-terminus. It can also cleave other RNA substrates such as 4.5S RNA. The protein component plays an auxiliary but essential role in vivo by binding to the 5'-leader sequence and broadening the substrate specificity of the ribozyme. This Herpetosiphon aurantiacus (strain ATCC 23779 / DSM 785 / 114-95) protein is Ribonuclease P protein component.